We begin with the raw amino-acid sequence, 271 residues long: Glutamate racemase (271 aa).

Residues 10-11 and 42-43 contribute to the substrate site; these read DS and YG. Catalysis depends on cysteine 73, which acts as the Proton donor/acceptor. Substrate is bound at residue 74–75; it reads NT. Residue cysteine 183 is the Proton donor/acceptor of the active site. Position 184–185 (184–185) interacts with substrate; it reads TH.

The protein belongs to the aspartate/glutamate racemases family.

It catalyses the reaction L-glutamate = D-glutamate. It functions in the pathway cell wall biogenesis; peptidoglycan biosynthesis. In terms of biological role, provides the (R)-glutamate required for cell wall biosynthesis. This Streptococcus thermophilus (strain ATCC BAA-250 / LMG 18311) protein is Glutamate racemase.